The sequence spans 208 residues: ATP phosphoribosyltransferase (208 aa).

It belongs to the ATP phosphoribosyltransferase family. Short subfamily. In terms of assembly, heteromultimer composed of HisG and HisZ subunits.

Its subcellular location is the cytoplasm. It catalyses the reaction 1-(5-phospho-beta-D-ribosyl)-ATP + diphosphate = 5-phospho-alpha-D-ribose 1-diphosphate + ATP. It functions in the pathway amino-acid biosynthesis; L-histidine biosynthesis; L-histidine from 5-phospho-alpha-D-ribose 1-diphosphate: step 1/9. Catalyzes the condensation of ATP and 5-phosphoribose 1-diphosphate to form N'-(5'-phosphoribosyl)-ATP (PR-ATP). Has a crucial role in the pathway because the rate of histidine biosynthesis seems to be controlled primarily by regulation of HisG enzymatic activity. This chain is ATP phosphoribosyltransferase, found in Clostridioides difficile (strain 630) (Peptoclostridium difficile).